The chain runs to 296 residues: 33 kDa chaperonin (296 aa).

2 disulfides stabilise this stretch: Cys-236-Cys-238 and Cys-269-Cys-272.

The protein belongs to the HSP33 family. Post-translationally, under oxidizing conditions two disulfide bonds are formed involving the reactive cysteines. Under reducing conditions zinc is bound to the reactive cysteines and the protein is inactive.

Its subcellular location is the cytoplasm. Redox regulated molecular chaperone. Protects both thermally unfolding and oxidatively damaged proteins from irreversible aggregation. Plays an important role in the bacterial defense system toward oxidative stress. The polypeptide is 33 kDa chaperonin (Lactobacillus helveticus (strain DPC 4571)).